Here is a 428-residue protein sequence, read N- to C-terminus: UDP-N-acetylglucosamine 1-carboxyvinyltransferase (428 aa).

25 to 26 (KN) is a phosphoenolpyruvate binding site. Arg102 provides a ligand contact to UDP-N-acetyl-alpha-D-glucosamine. The active-site Proton donor is Cys126. Position 126 is a 2-(S-cysteinyl)pyruvic acid O-phosphothioketal (Cys126). The UDP-N-acetyl-alpha-D-glucosamine site is built by Asp316 and Val338.

It belongs to the EPSP synthase family. MurA subfamily.

Its subcellular location is the cytoplasm. The enzyme catalyses phosphoenolpyruvate + UDP-N-acetyl-alpha-D-glucosamine = UDP-N-acetyl-3-O-(1-carboxyvinyl)-alpha-D-glucosamine + phosphate. The protein operates within cell wall biogenesis; peptidoglycan biosynthesis. Its function is as follows. Cell wall formation. Adds enolpyruvyl to UDP-N-acetylglucosamine. The chain is UDP-N-acetylglucosamine 1-carboxyvinyltransferase from Anaplasma marginale (strain St. Maries).